Consider the following 357-residue polypeptide: Peptide chain release factor 1 (357 aa).

At Gln-234 the chain carries N5-methylglutamine.

It belongs to the prokaryotic/mitochondrial release factor family. Post-translationally, methylated by PrmC. Methylation increases the termination efficiency of RF1.

It localises to the cytoplasm. In terms of biological role, peptide chain release factor 1 directs the termination of translation in response to the peptide chain termination codons UAG and UAA. This chain is Peptide chain release factor 1 (prfA), found in Lactococcus lactis subsp. lactis (strain IL1403) (Streptococcus lactis).